The primary structure comprises 145 residues: MSLTDYVREVSLADFGKPFKHQASWNRRLRTTGGRFFPKDGHLDFNPKILEEHGETVFRQIVRHELCHYHLYFEGLGFRHKDQAFKELLDQVDGLRYAPKLQSHQANYLYICQDCGQAYDRKRPINLAVFACGRCHGRLIEKNQS.

The SprT-like domain maps to 5–140; it reads DYVREVSLAD…ACGRCHGRLI (136 aa). A Zn(2+)-binding site is contributed by His-64. Residue Glu-65 is part of the active site. Zn(2+) is bound at residue His-68.

It belongs to the SprT family. The cofactor is Zn(2+).

The protein resides in the cytoplasm. The polypeptide is Protein SprT-like (Streptococcus equi subsp. equi (strain 4047)).